We begin with the raw amino-acid sequence, 409 residues long: Nucleoprotein (409 aa).

Disordered regions lie at residues 1–32 (MASG…SSGN), 46–69 (SPPL…QQHG), 120–193 (GADT…SGAE), and 238–259 (VDQV…DKMN). A compositionally biased stretch (low complexity) spans 15–31 (PVIKLGGPKPPKVGSSG). Residues 29 to 160 (SSGNASWFQA…GNFRWDFIPL (132 aa)) form an RNA-binding region. One can recognise a CoV N NTD domain in the interval 31 to 156 (GNASWFQAIK…GGPDGNFRWD (126 aa)). The segment covering 162 to 179 (RGRSGKSTAASSAASSRA) has biased composition (low complexity). Composition is skewed to basic and acidic residues over residues 180 to 192 (PSRE…RSGA) and 247 to 259 (KGKE…DKMN). The residue at position 190 (S190) is a Phosphoserine; by host. The CoV N CTD domain maps to 215-331 (TKAKADEMAH…QCVDGVGTRP (117 aa)). The interval 226–333 (RYCKRTIPPG…VDGVGTRPKD (108 aa)) is dimerization. C320 and C323 are joined by a disulfide. The tract at residues 327–409 (VGTRPKDDEP…GDSALGENEL (83 aa)) is disordered. The span at 341 to 354 (RSSSRPATRTSSPA) shows a compositional bias: low complexity. Over residues 358-367 (PRPKKEKKTK) the composition is skewed to basic residues. Over residues 368–384 (KQDDEVDKALTSDEERN) the composition is skewed to basic and acidic residues. T378 is subject to Phosphothreonine; by host. S379 is subject to Phosphoserine; by host.

The protein belongs to the gammacoronavirus nucleocapsid protein family. As to quaternary structure, homooligomer. Both monomeric and oligomeric forms interact with RNA. Interacts with protein M. Interacts with NSP3; this interaction serves to tether the genome to the newly translated replicase-transcriptase complex at a very early stage of infection. In terms of processing, ADP-ribosylated. The ADP-ribosylation is retained in the virion during infection. Post-translationally, phosphorylated on serine and threonine residues.

Its subcellular location is the virion. It localises to the host endoplasmic reticulum-Golgi intermediate compartment. The protein localises to the host Golgi apparatus. Packages the positive strand viral genome RNA into a helical ribonucleocapsid (RNP) and plays a fundamental role during virion assembly through its interactions with the viral genome and membrane protein M. Plays an important role in enhancing the efficiency of subgenomic viral RNA transcription as well as viral replication. In Gallus gallus (Chicken), this protein is Nucleoprotein.